The sequence spans 152 residues: Glycine cleavage system H protein, mitochondrial (152 aa).

The N-terminal 31 residues, 1 to 31 (MALRMWASSTANALRLSSATRPHYSPLSRCF), are a transit peptide targeting the mitochondrion. One can recognise a Lipoyl-binding domain in the interval 53–135 (VATVGITDHA…YEDGWMIKVK (83 aa)). Lys94 carries the N6-lipoyllysine modification.

This sequence belongs to the GcvH family. As to quaternary structure, the glycine cleavage system is composed of four proteins: P, T, L and H. Requires (R)-lipoate as cofactor.

The protein localises to the mitochondrion. The glycine cleavage system catalyzes the degradation of glycine. The H protein shuttles the methylamine group of glycine from the P protein to the T protein. The chain is Glycine cleavage system H protein, mitochondrial (GDCSH) from Flaveria pubescens (Yellowtops).